The chain runs to 199 residues: Probable adenine phosphoribosyltransferase (199 aa).

This sequence belongs to the purine/pyrimidine phosphoribosyltransferase family. In terms of assembly, homodimer.

Its subcellular location is the cytoplasm. It carries out the reaction AMP + diphosphate = 5-phospho-alpha-D-ribose 1-diphosphate + adenine. Its pathway is purine metabolism; AMP biosynthesis via salvage pathway; AMP from adenine: step 1/1. In terms of biological role, catalyzes a salvage reaction resulting in the formation of AMP, that is energically less costly than de novo synthesis. This is Probable adenine phosphoribosyltransferase (aprt) from Dictyostelium discoideum (Social amoeba).